Here is a 426-residue protein sequence, read N- to C-terminus: Adenylosuccinate synthetase (426 aa).

GTP contacts are provided by residues 11–17 (GDEGKGK) and 39–41 (GHT). Catalysis depends on D12, which acts as the Proton acceptor. Residues D12 and G39 each contribute to the Mg(2+) site. Residues 12–15 (DEGK), 37–40 (NAGH), T130, R144, N226, T241, and R305 contribute to the IMP site. Residue H40 is the Proton donor of the active site. Position 301–307 (301–307 (VTTGRKR)) interacts with substrate. GTP is bound by residues R307, 333-335 (KLD), and 415-417 (GTG).

Belongs to the adenylosuccinate synthetase family. As to quaternary structure, homodimer. Requires Mg(2+) as cofactor.

Its subcellular location is the cytoplasm. It carries out the reaction IMP + L-aspartate + GTP = N(6)-(1,2-dicarboxyethyl)-AMP + GDP + phosphate + 2 H(+). It participates in purine metabolism; AMP biosynthesis via de novo pathway; AMP from IMP: step 1/2. In terms of biological role, plays an important role in the de novo pathway and in the salvage pathway of purine nucleotide biosynthesis. Catalyzes the first committed step in the biosynthesis of AMP from IMP. In Meyerozyma guilliermondii (strain ATCC 6260 / CBS 566 / DSM 6381 / JCM 1539 / NBRC 10279 / NRRL Y-324) (Yeast), this protein is Adenylosuccinate synthetase.